Consider the following 408-residue polypeptide: Multidrug resistance protein MdtG (408 aa).

The next 11 helical transmembrane spans lie at 16–36 (LIVA…VMPF), 58–78 (IVFS…GGLA), 92–112 (LGMG…QFLI), 115–135 (ALLG…ATQV), 146–166 (TLST…GLLA), 173–193 (PVFF…LFCI), 224–244 (LFVT…ILTL), 256–276 (VAFI…LSAP), 290–310 (ILIT…YVQT), 319–339 (FLLG…LVYN), and 378–398 (AVFL…WNSL).

It belongs to the major facilitator superfamily. DHA1 family. MdtG (TC 2.A.1.2.20) subfamily.

It is found in the cell inner membrane. In terms of biological role, confers resistance to fosfomycin and deoxycholate. This Escherichia coli O7:K1 (strain IAI39 / ExPEC) protein is Multidrug resistance protein MdtG.